Here is a 165-residue protein sequence, read N- to C-terminus: Lipoprotein signal peptidase (165 aa).

3 consecutive transmembrane segments (helical) span residues 9–29, 69–89, and 100–120; these read LLTI…VLLY, KYFL…FLFL, and FSLI…FFYN. Catalysis depends on residues Asp-124 and Asp-142. The helical transmembrane segment at 133–153 threads the bilayer; that stretch reads WSFPTFNFADIFISLGTLIFV.

It belongs to the peptidase A8 family.

The protein localises to the cell inner membrane. The enzyme catalyses Release of signal peptides from bacterial membrane prolipoproteins. Hydrolyzes -Xaa-Yaa-Zaa-|-(S,diacylglyceryl)Cys-, in which Xaa is hydrophobic (preferably Leu), and Yaa (Ala or Ser) and Zaa (Gly or Ala) have small, neutral side chains.. It participates in protein modification; lipoprotein biosynthesis (signal peptide cleavage). Its function is as follows. This protein specifically catalyzes the removal of signal peptides from prolipoproteins. The sequence is that of Lipoprotein signal peptidase from Chlamydia felis (strain Fe/C-56) (Chlamydophila felis).